The following is a 250-amino-acid chain: MPRYKLVIEYDGAPFRGWQRQADDPTVQAAIETAVTRFSGETARLTCAGRTDAGVHAIHQVAHLDLAKDWRTDTVRDALNARLRPQPVAILSAEVVPQEFDARHSAIRRHYRYRILNRRSPAALTRAHVWQVPWPLDAELMHRAAQRLLGHHDFSAFRAAECQAKSPMRTLEQLDVTRVRMGLFEEIVIATSARSFLHHQVRAMAGTLMLAGCKRLSADDVAEILATGAKHRCGPLAPACGLTFVGVDYP.

Aspartate 52 acts as the Nucleophile in catalysis. Substrate is bound at residue tyrosine 111.

It belongs to the tRNA pseudouridine synthase TruA family. Homodimer.

It carries out the reaction uridine(38/39/40) in tRNA = pseudouridine(38/39/40) in tRNA. Its function is as follows. Formation of pseudouridine at positions 38, 39 and 40 in the anticodon stem and loop of transfer RNAs. This is tRNA pseudouridine synthase A from Methylorubrum extorquens (strain PA1) (Methylobacterium extorquens).